The sequence spans 154 residues: Superoxide dismutase [Cu-Zn] (154 aa).

Cu cation is bound by residues H47, H49, and H64. A disulfide bridge links C58 with C147. H64, H72, H81, and D84 together coordinate Zn(2+). H121 lines the Cu cation pocket. A compositionally biased stretch (basic and acidic residues) spans 124–137; the sequence is TDDLGRGDSEESKK. The segment at 124 to 144 is disordered; that stretch reads TDDLGRGDSEESKKTGNAGAR. R144 contacts substrate.

The protein belongs to the Cu-Zn superoxide dismutase family. In terms of assembly, homodimer. It depends on Cu cation as a cofactor. Zn(2+) is required as a cofactor.

Its subcellular location is the cytoplasm. The enzyme catalyses 2 superoxide + 2 H(+) = H2O2 + O2. Its function is as follows. Destroys radicals which are normally produced within the cells and which are toxic to biological systems. This Emericella nidulans (strain FGSC A4 / ATCC 38163 / CBS 112.46 / NRRL 194 / M139) (Aspergillus nidulans) protein is Superoxide dismutase [Cu-Zn] (sodA).